We begin with the raw amino-acid sequence, 238 residues long: Dolichyldiphosphatase 1 (238 aa).

4 helical membrane passes run 33-53 (LAYLSLSPIFVVVGFLTLIIF), 100-120 (PSSHSQFMWFFSVYSFLFLYL), 130-150 (FLDLLWRHVLSLGLLTAAFLV), and 162-182 (WSQVFYGGVAGSLMAVAWFII).

Belongs to the dolichyldiphosphatase family. Widely expressed with highest levels in brain, kidney, lung and intestine.

The protein resides in the endoplasmic reticulum membrane. The catalysed reaction is a di-trans,poly-cis-dolichyl diphosphate + H2O = a di-trans,poly-cis-dolichyl phosphate + phosphate + H(+). It participates in protein modification; protein glycosylation. Functionally, required for efficient N-glycosylation. Necessary for maintaining optimal levels of dolichol-linked oligosaccharides. Hydrolyzes dolichyl pyrophosphate at a very high rate and dolichyl monophosphate at a much lower rate. Does not act on phosphatidate. This Mus musculus (Mouse) protein is Dolichyldiphosphatase 1 (Dolpp1).